The sequence spans 64 residues: Temporin-ALg (64 aa).

The N-terminal stretch at 1-22 (MFTLKKSLLLLFFLGTINLSLC) is a signal peptide. Residues 23-46 (EQERNAEEERRDDLGERQAEVEKR) constitute a propeptide that is removed on maturation. L62 is subject to Leucine amide.

This sequence belongs to the frog skin active peptide (FSAP) family. Temporin subfamily. In terms of tissue distribution, expressed by the skin glands.

It localises to the secreted. In terms of biological role, antimicrobial peptide with activity against Gram-positive and Gram-negative bacteria and against fungi. Has been tested against S.aureus (MIC=2.5 ug/mL), B.pumilus (MIC=2.5 ug/mL), B.cereus (MIC=30.0 ug/mL), E.coli (MIC=5.0 ug/mL), B.dysenteriae (MIC=10.0 ug/mL), A.cacoaceticus (MIC=30.0 ug/mL), P.aeruginosa (MIC=7.5 ug/mL) and C.albicans (MIC=1.25 ug/mL). Also shows a weak hemolytic activity. The polypeptide is Temporin-ALg (Amolops loloensis (Lolokou Sucker Frog)).